Here is a 390-residue protein sequence, read N- to C-terminus: Multidrug export protein EmrA (390 aa).

The Cytoplasmic segment spans residues 1 to 24 (MSANAETQTPQQPVKKSGKRKRLL). Residues 25 to 45 (LLLTLLFIIIAVAIGIYWFLV) form a helical membrane-spanning segment. Residues 46–390 (LRHFEETDDA…IDDIVKANAG (345 aa)) lie on the Periplasmic side of the membrane. Residues 120 to 180 (INSKQLQANI…QAQLDVAIQQ (61 aa)) are a coiled coil.

Belongs to the membrane fusion protein (MFP) (TC 8.A.1) family. In terms of assembly, homodimer and homotrimer. Part of the tripartite efflux system EmrAB-TolC, which is composed of an inner membrane transporter, EmrB, a periplasmic membrane fusion protein, EmrA, and an outer membrane component, TolC. The complex forms a large protein conduit and can translocate molecules across both the inner and outer membranes. Interacts with EmrB. EmrAB complex forms a dimer in vitro.

It is found in the cell inner membrane. In terms of biological role, part of the tripartite efflux system EmrAB-TolC, which confers resistance to antibiotics such as CCCP, FCCP, 2,4-dinitrophenol and nalidixic acid. EmrA is a drug-binding protein that provides a physical link between EmrB and TolC. In Escherichia coli (strain K12), this protein is Multidrug export protein EmrA (emrA).